Consider the following 189-residue polypeptide: Parkinson disease protein 7 homolog (189 aa).

An N-acetylalanine modification is found at alanine 2. Residues cysteine 46 and cysteine 53 are each lipidated (S-palmitoyl cysteine). A Phosphotyrosine modification is found at tyrosine 67. Cysteine 106 acts as the Nucleophile in catalysis. At cysteine 106 the chain carries Cysteine sulfinic acid (-SO2H); alternate. Cysteine 106 carries the S-palmitoyl cysteine; alternate lipid modification. The active site involves histidine 126. Lysine 130 participates in a covalent cross-link: Glycyl lysine isopeptide (Lys-Gly) (interchain with G-Cter in SUMO). An N6-acetyllysine modification is found at lysine 148. The residue at position 182 (lysine 182) is an N6-succinyllysine.

Belongs to the peptidase C56 family. As to quaternary structure, homodimer. Binds EFCAB6/DJBP and PIAS2. Part of a ternary complex containing PARK7, EFCAB6/DJBP and AR. Binds to HIPK1. Interacts (via N-terminus) with OTUD7B. Interacts with BBS1, CLCF1 and MTERF. Interacts (via C-terminus) with NCF1; the interaction is enhanced by LPS and modulates NCF1 phosphorylation and membrane translocation. Interacts with NENF. Requires Deglycase activity does not require glutathione as a cofactor, however, glycated glutathione constitutes a PARK7 substrate. as cofactor. Sumoylated on Lys-130 by PIAS2 or PIAS4; which is essential for cell-growth promoting activity and transforming activity. Post-translationally, undergoes cleavage of a C-terminal peptide and subsequent activation of protease activity in response to oxidative stress. Expressed in erythroblasts and in mature red blood cells from peripheral blood (at protein level). In pancreas, expression is higher in islets than surrounding exocrine tissues.

It is found in the cell membrane. The protein resides in the cytoplasm. Its subcellular location is the membrane raft. It localises to the nucleus. The protein localises to the mitochondrion. It is found in the endoplasmic reticulum. It carries out the reaction N(omega)-(1-hydroxy-2-oxopropyl)-L-arginyl-[protein] + H2O = lactate + L-arginyl-[protein] + H(+). The enzyme catalyses N(6)-(1-hydroxy-2-oxopropyl)-L-lysyl-[protein] + H2O = lactate + L-lysyl-[protein] + H(+). The catalysed reaction is S-(1-hydroxy-2-oxopropyl)-L-cysteinyl-[protein] + H2O = lactate + L-cysteinyl-[protein] + H(+). It catalyses the reaction N(omega)-(1-hydroxy-2-oxoethyl)-L-arginyl-[protein] + H2O = L-arginyl-[protein] + glycolate + H(+). It carries out the reaction N(6)-(1-hydroxy-2-oxoethyl)-L-lysyl-[protein] + H2O = glycolate + L-lysyl-[protein] + H(+). The enzyme catalyses S-(1-hydroxy-2-oxoethyl)-L-cysteinyl-[protein] + H2O = glycolate + L-cysteinyl-[protein] + H(+). The catalysed reaction is N(2)-(1-hydroxy-2-oxopropyl)-dGTP + H2O = lactate + dGTP + H(+). It catalyses the reaction N(2)-(1-hydroxy-2-oxopropyl)-GTP + H2O = lactate + GTP + H(+). It carries out the reaction N(2)-(1-hydroxy-2-oxopropyl)-GDP + H2O = lactate + GDP + H(+). The enzyme catalyses N(2)-(1-hydroxy-2-oxopropyl)-GMP + H2O = lactate + GMP + H(+). The catalysed reaction is N(2)-(1-hydroxy-2-oxoethyl)-dGTP + H2O = dGTP + glycolate + H(+). It catalyses the reaction N(2)-(1-hydroxy-2-oxoethyl)-GTP + H2O = glycolate + GTP + H(+). It carries out the reaction N(2)-(1-hydroxy-2-oxoethyl)-GDP + H2O = glycolate + GDP + H(+). The enzyme catalyses N(2)-(1-hydroxy-2-oxoethyl)-GMP + H2O = glycolate + GMP + H(+). The catalysed reaction is an N(2)-(1-hydroxy-2-oxopropyl)-guanosine in RNA + H2O = a guanosine in RNA + lactate + H(+). It catalyses the reaction an N(2)-(1-hydroxy-2-oxopropyl)-2'-deoxyguanosine in DNA + H2O = a 2'-deoxyguanosine in DNA + lactate + H(+). It carries out the reaction an N(2)-(1-hydroxy-2-oxoethyl)-guanosine in RNA + H2O = a guanosine in RNA + glycolate + H(+). The enzyme catalyses an N(2)-(1-hydroxy-2-oxoethyl)-2'-deoxyguanosine in DNA + H2O = a 2'-deoxyguanosine in DNA + glycolate + H(+). In terms of biological role, multifunctional protein with controversial molecular function which plays an important role in cell protection against oxidative stress and cell death acting as oxidative stress sensor and redox-sensitive chaperone and protease. It is involved in neuroprotective mechanisms like the stabilization of NFE2L2 and PINK1 proteins, male fertility as a positive regulator of androgen signaling pathway as well as cell growth and transformation through, for instance, the modulation of NF-kappa-B signaling pathway. Has been described as a protein and nucleotide deglycase that catalyzes the deglycation of the Maillard adducts formed between amino groups of proteins or nucleotides and reactive carbonyl groups of glyoxals. But this function is rebuted by other works. As a protein deglycase, repairs methylglyoxal- and glyoxal-glycated proteins, and releases repaired proteins and lactate or glycolate, respectively. Deglycates cysteine, arginine and lysine residues in proteins, and thus reactivates these proteins by reversing glycation by glyoxals. Acts on early glycation intermediates (hemithioacetals and aminocarbinols), preventing the formation of advanced glycation endproducts (AGE) that cause irreversible damage. Also functions as a nucleotide deglycase able to repair glycated guanine in the free nucleotide pool (GTP, GDP, GMP, dGTP) and in DNA and RNA. Is thus involved in a major nucleotide repair system named guanine glycation repair (GG repair), dedicated to reversing methylglyoxal and glyoxal damage via nucleotide sanitization and direct nucleic acid repair. Protects histones from adduction by methylglyoxal, controls the levels of methylglyoxal-derived argininine modifications on chromatin. Able to remove the glycations and restore histone 3, histone glycation disrupts both local and global chromatin architecture by altering histone-DNA interactions as well as histone acetylation and ubiquitination levels. Displays a very low glyoxalase activity that may reflect its deglycase activity. Eliminates hydrogen peroxide and protects cells against hydrogen peroxide-induced cell death. Required for correct mitochondrial morphology and function as well as for autophagy of dysfunctional mitochondria. Plays a role in regulating expression or stability of the mitochondrial uncoupling proteins SLC25A14 and SLC25A27 in dopaminergic neurons of the substantia nigra pars compacta and attenuates the oxidative stress induced by calcium entry into the neurons via L-type channels during pacemaking. Regulates astrocyte inflammatory responses, may modulate lipid rafts-dependent endocytosis in astrocytes and neuronal cells. In pancreatic islets, involved in the maintenance of mitochondrial reactive oxygen species (ROS) levels and glucose homeostasis in an age- and diet dependent manner. Protects pancreatic beta cells from cell death induced by inflammatory and cytotoxic setting. Binds to a number of mRNAs containing multiple copies of GG or CC motifs and partially inhibits their translation but dissociates following oxidative stress. Metal-binding protein able to bind copper as well as toxic mercury ions, enhances the cell protection mechanism against induced metal toxicity. In macrophages, interacts with the NADPH oxidase subunit NCF1 to direct NADPH oxidase-dependent ROS production, and protects against sepsis. This is Parkinson disease protein 7 homolog from Mus musculus (Mouse).